A 487-amino-acid chain; its full sequence is Phosphoglucosamine mutase (487 aa).

S134 serves as the catalytic Phosphoserine intermediate. Residues S134, D277, D279, and D281 each contribute to the Mg(2+) site. S134 carries the phosphoserine modification.

Belongs to the phosphohexose mutase family. Mg(2+) is required as a cofactor. Post-translationally, activated by phosphorylation.

The enzyme catalyses alpha-D-glucosamine 1-phosphate = D-glucosamine 6-phosphate. In terms of biological role, catalyzes the conversion of glucosamine-6-phosphate to glucosamine-1-phosphate. This Gloeothece citriformis (strain PCC 7424) (Cyanothece sp. (strain PCC 7424)) protein is Phosphoglucosamine mutase.